The following is a 4652-amino-acid chain: Low-density lipoprotein receptor-related protein 2 (4652 aa).

An N-terminal signal peptide occupies residues 1-25; the sequence is MERWAAAAACTLLLAFAACLAPASG. Residues 26 to 4422 lie on the Extracellular side of the membrane; sequence RECLGNEFRC…SKGISPGTTV (4397 aa). LDL-receptor class A domains follow at residues 27-63, 66-104, 108-144, 142-181, 183-219, 223-259, and 267-308; these read ECLG…IGCP, TCGS…QRCP, TCSS…INCR, NCRY…LNCT, RCLR…HSCS, PCKG…DGCE, and ECYP…RVCD. 21 disulfides stabilise this stretch: cysteine 28/cysteine 40, cysteine 35/cysteine 53, cysteine 47/cysteine 62, cysteine 67/cysteine 80, cysteine 74/cysteine 93, cysteine 87/cysteine 103, cysteine 109/cysteine 121, cysteine 116/cysteine 134, cysteine 128/cysteine 143, cysteine 143/cysteine 158, cysteine 153/cysteine 171, cysteine 165/cysteine 180, cysteine 184/cysteine 196, cysteine 191/cysteine 209, cysteine 203/cysteine 218, cysteine 224/cysteine 236, cysteine 231/cysteine 249, cysteine 243/cysteine 258, cysteine 268/cysteine 281, cysteine 275/cysteine 294, and cysteine 288/cysteine 307. 2 N-linked (GlcNAc...) asparagine glycosylation sites follow: asparagine 160 and asparagine 179. A glycan (N-linked (GlcNAc...) asparagine) is linked at asparagine 341. In terms of domain architecture, EGF-like 1; calcium-binding spans 348–386; that stretch reads DFNDCQIWGICDHFCEDRIGHHQCFCAEGYVLEHEQHCR. Intrachain disulfides connect cysteine 352/cysteine 362, cysteine 358/cysteine 371, and cysteine 373/cysteine 385. N-linked (GlcNAc...) asparagine glycosylation occurs at asparagine 388. LDL-receptor class B repeat units follow at residues 436-478, 479-521, 522-568, 569-613, 753-795, 796-837, 838-881, and 882-925; these read SKVF…DWIN, NKLY…DPTV, GYLF…DLVA, KRVY…FEDN, NAIF…DWIS, RNLY…HPIA, GYIF…DWGS, and SRLY…FGEY. Asparagine 771 carries an N-linked (GlcNAc...) asparagine glycan. Residue asparagine 866 is glycosylated (N-linked (GlcNAc...) asparagine). N-linked (GlcNAc...) asparagine glycosylation is present at asparagine 1015. Positions 1025 to 1061 constitute an LDL-receptor class A 8 domain; it reads QCGALSFPCNNGRCVPLHYRCDGVDDCHDNSDEVQCG. 3 cysteine pairs are disulfide-bonded: cysteine 1026–cysteine 1038, cysteine 1033–cysteine 1051, and cysteine 1045–cysteine 1060. N-linked (GlcNAc...) asparagine glycosylation occurs at asparagine 1064. 7 consecutive LDL-receptor class A domains span residues 1066–1104, 1110–1146, 1150–1186, 1188–1225, 1231–1269, 1272–1308, and 1313–1351; these read SCAP…QNCS, SCRA…KRCD, TCSP…SACV, NCTD…IDCP, MCRQ…SGCP, TCPX…KDCP, and LCPS…PLCN. 9 cysteine pairs are disulfide-bonded: cysteine 1067-cysteine 1081, cysteine 1074-cysteine 1094, cysteine 1088-cysteine 1103, cysteine 1111-cysteine 1123, cysteine 1118-cysteine 1136, cysteine 1130-cysteine 1145, cysteine 1151-cysteine 1163, cysteine 1158-cysteine 1176, and cysteine 1170-cysteine 1185. N-linked (GlcNAc...) asparagine glycosylation occurs at asparagine 1102. Positions 1128, 1131, 1133, 1135, 1141, and 1142 each coordinate Ca(2+). The N-linked (GlcNAc...) asparagine glycan is linked to asparagine 1188. Disulfide bonds link cysteine 1189–cysteine 1202, cysteine 1196–cysteine 1215, cysteine 1209–cysteine 1224, cysteine 1232–cysteine 1245, cysteine 1239–cysteine 1258, cysteine 1252–cysteine 1268, cysteine 1273–cysteine 1285, cysteine 1280–cysteine 1298, cysteine 1292–cysteine 1307, cysteine 1314–cysteine 1327, cysteine 1321–cysteine 1340, and cysteine 1334–cysteine 1350. Ca(2+) is bound by residues tyrosine 1207, aspartate 1210, valine 1212, aspartate 1214, aspartate 1220, and glutamate 1221. N-linked (GlcNAc...) asparagine glycosylation is present at asparagine 1329. Residues asparagine 1385, asparagine 1452, asparagine 1498, and asparagine 1552 are each glycosylated (N-linked (GlcNAc...) asparagine). 10 LDL-receptor class B repeats span residues 1480-1522, 1523-1565, 1568-1611, 1612-1654, 1655-1696, 1789-1831, 1832-1881, 1882-1929, 1930-1971, and 1972-2012; these read GRIF…DWVG, RNLY…DPRV, RVIF…DYPT, RLLY…TIFE, DSIY…VHPA, QFLY…DWLS, RNLY…DPAK, GKLY…DIQE, QKLY…YGPY, and LYYA…YRRR. Asparagine 1677 and asparagine 1809 each carry an N-linked (GlcNAc...) asparagine glycan. Residue asparagine 2053 is glycosylated (N-linked (GlcNAc...) asparagine). 9 LDL-receptor class B repeats span residues 2105–2154, 2155–2199, 2200–2243, 2244–2287, 2429–2475, 2476–2516, 2517–2560, 2561–2602, and 2603–2644; these read GFVY…DWVA, GNLY…DPKN, RYLF…DHNS, GYIY…FGNS, NRIY…DWIG, RRIY…DPCQ, GYMY…DYKE, NLLY…YGQY, and IYWT…VVNN. Residues asparagine 2175 and asparagine 2222 are each glycosylated (N-linked (GlcNAc...) asparagine). Asparagine 2485 is a glycosylation site (N-linked (GlcNAc...) asparagine). 10 LDL-receptor class A domains span residues 2696-2734, 2737-2773, 2776-2815, 2818-2857, 2860-2897, 2902-2941, 2944-2986, 2989-3025, 3028-3066, and 3071-3107; these read RCNS…TLCA, TCPP…SGCR, SCNI…KNCA, TCLP…IYCV, TCKN…ATCV, TCSS…HHCE, NCSS…QNCT, NCSG…RNCK, ACDE…HLCH, and TCPP…ERCG. Disulfide bonds link cysteine 2697–cysteine 2709, cysteine 2704–cysteine 2722, cysteine 2716–cysteine 2733, cysteine 2738–cysteine 2750, cysteine 2745–cysteine 2763, cysteine 2757–cysteine 2772, cysteine 2777–cysteine 2790, cysteine 2785–cysteine 2803, cysteine 2797–cysteine 2814, cysteine 2819–cysteine 2832, cysteine 2826–cysteine 2845, cysteine 2839–cysteine 2856, cysteine 2861–cysteine 2873, cysteine 2868–cysteine 2886, cysteine 2880–cysteine 2896, cysteine 2903–cysteine 2915, cysteine 2910–cysteine 2928, and cysteine 2922–cysteine 2940. The N-linked (GlcNAc...) asparagine glycan is linked to asparagine 2698. A glycan (N-linked (GlcNAc...) asparagine) is linked at asparagine 2778. 2 N-linked (GlcNAc...) asparagine glycosylation sites follow: asparagine 2806 and asparagine 2807. Asparagine 2944 carries N-linked (GlcNAc...) asparagine glycosylation. 3 disulfide bridges follow: cysteine 2945–cysteine 2962, cysteine 2952–cysteine 2975, and cysteine 2969–cysteine 2985. Residues asparagine 2984 and asparagine 2989 are each glycosylated (N-linked (GlcNAc...) asparagine). 9 disulfide bridges follow: cysteine 2990/cysteine 3002, cysteine 2997/cysteine 3015, cysteine 3009/cysteine 3024, cysteine 3029/cysteine 3041, cysteine 3036/cysteine 3054, cysteine 3048/cysteine 3065, cysteine 3072/cysteine 3084, cysteine 3079/cysteine 3097, and cysteine 3091/cysteine 3106. Residue asparagine 3122 is glycosylated (N-linked (GlcNAc...) asparagine). The EGF-like 2; calcium-binding domain occupies 3149–3189; it reads DIDECKETPSVCSQKCENLLGSYICKCAPGYTREPDGRSCR. 3 disulfides stabilise this stretch: cysteine 3153-cysteine 3164, cysteine 3160-cysteine 3173, and cysteine 3175-cysteine 3188. 4 N-linked (GlcNAc...) asparagine glycosylation sites follow: asparagine 3208, asparagine 3254, asparagine 3312, and asparagine 3352. LDL-receptor class B repeat units follow at residues 3236–3278, 3279–3321, 3330–3373, 3374–3417, and 3418–3458; these read ERLY…DWVT, RKLY…DKPR, GYVY…DYTN, DLLY…FEDT, and IYWT…YHPY. Asparagine 3435 and asparagine 3444 each carry an N-linked (GlcNAc...) asparagine glycan. 9 consecutive LDL-receptor class A domains span residues 3509–3547, 3550–3588, 3591–3629, 3632–3670, 3675–3713, 3716–3753, 3756–3792, 3795–3831, and 3839–3877; these read MCSS…NTCP, FCRL…VLCE, RCES…SHCA, TCLP…QECM, RCDN…QNCE, TCKP…ENCV, QCSE…RDCE, TCHP…ATCP, and YCPA…HLCL. Cystine bridges form between cysteine 3510–cysteine 3523, cysteine 3517–cysteine 3536, cysteine 3530–cysteine 3546, cysteine 3551–cysteine 3563, cysteine 3558–cysteine 3576, cysteine 3570–cysteine 3587, cysteine 3592–cysteine 3604, cysteine 3599–cysteine 3617, cysteine 3611–cysteine 3628, cysteine 3633–cysteine 3645, cysteine 3640–cysteine 3658, cysteine 3652–cysteine 3669, cysteine 3676–cysteine 3690, cysteine 3684–cysteine 3703, cysteine 3697–cysteine 3712, cysteine 3717–cysteine 3730, cysteine 3725–cysteine 3743, cysteine 3737–cysteine 3752, cysteine 3757–cysteine 3769, cysteine 3764–cysteine 3782, cysteine 3776–cysteine 3791, cysteine 3796–cysteine 3808, cysteine 3803–cysteine 3821, cysteine 3815–cysteine 3830, cysteine 3840–cysteine 3852, cysteine 3847–cysteine 3865, and cysteine 3859–cysteine 3876. Asparagine 3562 is a glycosylation site (N-linked (GlcNAc...) asparagine). Residue asparagine 3678 is glycosylated (N-linked (GlcNAc...) asparagine). The N-linked (GlcNAc...) asparagine glycan is linked to asparagine 3878. LDL-receptor class A domains follow at residues 3880-3919 and 3925-3961; these read TCDL…ENCL and PCTE…TGCN. Intrachain disulfides connect cysteine 3881/cysteine 3894, cysteine 3889/cysteine 3907, cysteine 3901/cysteine 3918, cysteine 3926/cysteine 3938, cysteine 3933/cysteine 3951, cysteine 3945/cysteine 3960, cysteine 3968/cysteine 3977, cysteine 3973/cysteine 3987, cysteine 3989/cysteine 4003, cysteine 4009/cysteine 4019, cysteine 4015/cysteine 4028, and cysteine 4030/cysteine 4045. Residues 3964–4004 form the EGF-like 3 domain; that stretch reads EERSCAENLCEHNCTQLIGGGFICSCRPGFKASSLNRNSCE. Asparagine 3976 is a glycosylation site (N-linked (GlcNAc...) asparagine). An EGF-like 4; calcium-binding domain is found at 4005-4046; sequence DINECEQFGVCPQNCHNTKGSYECTCAEGFRSMSEHYGERCA. The N-linked (GlcNAc...) asparagine glycan is linked to asparagine 4066. LDL-receptor class B repeat units lie at residues 4152–4194, 4195–4238, and 4240–4281; these read RHIY…NPKQ, GLMY…DYVN, and DRIY…FESQ. The N-linked (GlcNAc...) asparagine glycan is linked to asparagine 4325. An EGF-like 5 domain is found at 4375-4409; sequence MPPPCRCMNEGNCYFDKNNLPKCKCPSGYMGEYCE. Intrachain disulfides connect cysteine 4379–cysteine 4387, cysteine 4381–cysteine 4397, and cysteine 4399–cysteine 4408. Residues 4423–4443 form a helical membrane-spanning segment; that stretch reads AVLVTLILIIIIGGLVALGFF. Residues 4444-4652 lie on the Cytoplasmic side of the membrane; sequence HYRKTGSILI…ANLVREDSEA (209 aa). The SH3-binding signature appears at 4450-4459; that stretch reads SILISMPRLP. The short motif at 4453 to 4458 is the PxLPxI/L motif 1; mediates interaction with ANKRA2 element; it reads ISMPRL. Residues 4456-4461 carry the PxLPxI/L motif 2; mediates interaction with ANKRA2 motif; that stretch reads PRLPSL. Phosphoserine is present on serine 4460. An Endocytosis signal motif is present at residues 4518-4523; sequence FENPMY. Residues 4536–4553 are compositionally biased toward polar residues; it reads TTTQVSESGNVYNKNYGS. The segment at 4536–4652 is disordered; that stretch reads TTTQVSESGN…ANLVREDSEA (117 aa). Serine 4568 is subject to Phosphoserine. The segment at 4588 to 4601 is interaction with DAB2; the sequence is QNTNFENPIYAETE. The NPXY motif motif lies at 4594–4597; that stretch reads NPIY. The SH2-binding signature appears at 4597–4600; sequence YAET. The short motif at 4610–4621 is the SH3-binding element; the sequence is VTPPPSPSPPAK. Phosphoserine is present on serine 4615. Over residues 4626–4636 the composition is skewed to polar residues; that stretch reads KGTTPAYSATE. Threonine 4629 carries the post-translational modification Phosphothreonine. Residue serine 4650 is modified to Phosphoserine.

This sequence belongs to the LDLR family. As to quaternary structure, binds plasminogen, extracellular matrix components, plasminogen activator-plasminogen activator inhibitor type I complex, apolipoprotein E-enriched beta-VLDL, lipoprotein lipase, lactoferrin, CLU/clusterin and calcium. Forms a multimeric complex together with LRPAP1. Interacts (via PxLPxI/L motif) with ANKRA2 (via ankyrin repeats). Interacts with LRP2BP. Interacts (via NPXY motif) with DAB2; the interaction is not affected by tyrosine phosphorylation of the NPXY motif. Interacts with MB. Interacts with BMP4. Interacts with the Sonic hedgehog protein N-product which is the active product of SHH. Interacts with CST3 in a calcium-dependent manner. Interacts with the vitamin-D binding protein GC/DBP. Interacts with sex hormone-binding protein SHBG. Interacts with angiotensin-2. Also interacts with angiotensin 1-7. Interacts with APOM. Interacts with selenoprotein SEPP1. Interacts with LEP. Interacts with ALB. Interacts with the antiapoptotic protein BIRC5/survivin. Interacts with matrix metalloproteinase MMP2 in complex with metalloproteinase inhibitor TIMP1. In neurons, forms a trimeric complex with APP and APPB1/FE65. Interacts with LDLRAP1/ARH; mediates trafficking of LRP2 to the endocytic recycling compartment. Does not interact with beta-amyloid protein 40 alone but interacts with the complex composed of beta-amyloid protein 40 and CLU/APOJ. Interacts with MDK. Post-translationally, a fraction undergoes proteolytic cleavage of the extracellular domain at the cell membrane to generate a cytoplasmic tail fragment. This is internalized into the early endosome from where it trafficks in an LDLRAP1/ARH-dependent manner to the endocytic recycling compartment (ERC). In the ERC, it is further cleaved by gamma-secretase to release a fragment which translocates to the nucleus and mediates transcriptional repression. In terms of processing, N-glycosylation is required for ligand binding.

Its subcellular location is the apical cell membrane. The protein localises to the endosome lumen. It is found in the membrane. It localises to the clathrin-coated pit. The protein resides in the cell projection. Its subcellular location is the dendrite. The protein localises to the axon. Functionally, multiligand endocytic receptor. Acts together with CUBN to mediate endocytosis of high-density lipoproteins. Mediates receptor-mediated uptake of polybasic drugs such as aprotinin, aminoglycosides and polymyxin B. In the kidney, mediates the tubular uptake and clearance of leptin. Also mediates transport of leptin across the blood-brain barrier through endocytosis at the choroid plexus epithelium. Endocytosis of leptin in neuronal cells is required for hypothalamic leptin signaling and leptin-mediated regulation of feeding and body weight. Mediates endocytosis and subsequent lysosomal degradation of CST3 in kidney proximal tubule cells. Mediates renal uptake of 25-hydroxyvitamin D3 in complex with the vitamin D3 transporter GC/DBP. Mediates renal uptake of metallothionein-bound heavy metals. Together with CUBN, mediates renal reabsorption of myoglobin. Mediates renal uptake and subsequent lysosomal degradation of APOM. Plays a role in kidney selenium homeostasis by mediating renal endocytosis of selenoprotein SEPP1. Mediates renal uptake of the antiapoptotic protein BIRC5/survivin which may be important for functional integrity of the kidney. Mediates renal uptake of matrix metalloproteinase MMP2 in complex with metalloproteinase inhibitor TIMP1. Mediates endocytosis of Sonic hedgehog protein N-product (ShhN), the active product of SHH. Also mediates ShhN transcytosis. In the embryonic neuroepithelium, mediates endocytic uptake and degradation of BMP4, is required for correct SHH localization in the ventral neural tube and plays a role in patterning of the ventral telencephalon. Required at the onset of neurulation to sequester SHH on the apical surface of neuroepithelial cells of the rostral diencephalon ventral midline and to control PTCH1-dependent uptake and intracellular trafficking of SHH. During neurulation, required in neuroepithelial cells for uptake of folate bound to the folate receptor FOLR1 which is necessary for neural tube closure. In the adult brain, negatively regulates BMP signaling in the subependymal zone which enables neurogenesis to proceed. In astrocytes, mediates endocytosis of ALB which is required for the synthesis of the neurotrophic factor oleic acid. Involved in neurite branching. During optic nerve development, required for SHH-mediated migration and proliferation of oligodendrocyte precursor cells. Mediates endocytic uptake and clearance of SHH in the retinal margin which protects retinal progenitor cells from mitogenic stimuli and keeps them quiescent. Plays a role in reproductive organ development by mediating uptake in reproductive tissues of androgen and estrogen bound to the sex hormone binding protein SHBG. Mediates endocytosis of angiotensin-2. Also mediates endocytosis of angiotensis 1-7. Binds to the complex composed of beta-amyloid protein 40 and CLU/APOJ and mediates its endocytosis and lysosomal degradation. Required for embryonic heart development. Required for normal hearing, possibly through interaction with estrogen in the inner ear. The chain is Low-density lipoprotein receptor-related protein 2 from Sus scrofa (Pig).